A 452-amino-acid polypeptide reads, in one-letter code: tRNA modification GTPase MnmE (452 aa).

(6S)-5-formyl-5,6,7,8-tetrahydrofolate is bound by residues R21, E78, and K118. Residues G214–G375 enclose the TrmE-type G domain. Position 224 (N224) interacts with K(+). GTP-binding positions include N224–S229, T243–T249, and D268–G271. Position 228 (S228) interacts with Mg(2+). K(+) contacts are provided by T243, I245, and T248. T249 is a binding site for Mg(2+). Residue K452 participates in (6S)-5-formyl-5,6,7,8-tetrahydrofolate binding.

Belongs to the TRAFAC class TrmE-Era-EngA-EngB-Septin-like GTPase superfamily. TrmE GTPase family. Homodimer. Heterotetramer of two MnmE and two MnmG subunits. K(+) is required as a cofactor.

The protein resides in the cytoplasm. Functionally, exhibits a very high intrinsic GTPase hydrolysis rate. Involved in the addition of a carboxymethylaminomethyl (cmnm) group at the wobble position (U34) of certain tRNAs, forming tRNA-cmnm(5)s(2)U34. In Haemophilus influenzae (strain ATCC 51907 / DSM 11121 / KW20 / Rd), this protein is tRNA modification GTPase MnmE.